The primary structure comprises 526 residues: Peptide chain release factor 3 (526 aa).

The tr-type G domain occupies asparagine 8 to glutamine 277. Residues serine 17–threonine 24, aspartate 85–histidine 89, and asparagine 139–aspartate 142 each bind GTP.

It belongs to the TRAFAC class translation factor GTPase superfamily. Classic translation factor GTPase family. PrfC subfamily.

The protein resides in the cytoplasm. Functionally, increases the formation of ribosomal termination complexes and stimulates activities of RF-1 and RF-2. It binds guanine nucleotides and has strong preference for UGA stop codons. It may interact directly with the ribosome. The stimulation of RF-1 and RF-2 is significantly reduced by GTP and GDP, but not by GMP. This chain is Peptide chain release factor 3, found in Actinobacillus pleuropneumoniae serotype 3 (strain JL03).